The primary structure comprises 210 residues: Glutathione S-transferase P 2 (210 aa).

A GST N-terminal domain is found at 1-82; it reads SGYTLTYFPL…LLARYGLSGS (82 aa). Glutathione is bound by residues Tyr-7, Arg-13, Trp-38, Lys-46, 53 to 54, and 66 to 67; these read QI and QS. Positions 83–204 constitute a GST C-terminal domain; that stretch reads NEREIAINEM…KSEGRKRRPI (122 aa).

Belongs to the GST superfamily. Pi family. Homodimer. Liver, kidney, muscle, skin, lung and ovary.

It carries out the reaction RX + glutathione = an S-substituted glutathione + a halide anion + H(+). Functionally, conjugation of reduced glutathione to a wide number of exogenous and endogenous hydrophobic electrophiles. The sequence is that of Glutathione S-transferase P 2 from Bufo bufo (European toad).